We begin with the raw amino-acid sequence, 427 residues long: Queuine tRNA-ribosyltransferase catalytic subunit (427 aa).

Residue Asp-99 is the Proton acceptor of the active site. Substrate-binding positions include 99–103, Asp-153, Gln-196, and Gly-223; that span reads DSGGF. Residues 254–260 are RNA binding; sequence GVGFAAD. The active-site Nucleophile is the Asp-273. The tract at residues 278 to 282 is RNA binding; important for wobble base 34 recognition; that stretch reads TRTAR. Cys-311, Cys-313, Cys-316, and His-341 together coordinate Zn(2+). Residues 395–427 are disordered; the sequence is PADPERIDEQDQKPKTEKRRETEDVAEEQVASS. Positions 397-417 are enriched in basic and acidic residues; sequence DPERIDEQDQKPKTEKRRETE.

The protein belongs to the queuine tRNA-ribosyltransferase family. As to quaternary structure, heterodimer of a catalytic subunit and an accessory subunit. Requires Zn(2+) as cofactor.

The protein localises to the cytoplasm. The enzyme catalyses guanosine(34) in tRNA + queuine = queuosine(34) in tRNA + guanine. Functionally, catalytic subunit of the queuine tRNA-ribosyltransferase (TGT) that catalyzes the base-exchange of a guanine (G) residue with queuine (Q) at position 34 (anticodon wobble position) in tRNAs with GU(N) anticodons (tRNA-Asp, -Asn, -His and -Tyr), resulting in the hypermodified nucleoside queuosine (7-(((4,5-cis-dihydroxy-2-cyclopenten-1-yl)amino)methyl)-7-deazaguanosine). Catalysis occurs through a double-displacement mechanism. The nucleophile active site attacks the C1' of nucleotide 34 to detach the guanine base from the RNA, forming a covalent enzyme-RNA intermediate. The proton acceptor active site deprotonates the incoming queuine, allowing a nucleophilic attack on the C1' of the ribose to form the product. This Drosophila melanogaster (Fruit fly) protein is Queuine tRNA-ribosyltransferase catalytic subunit (Tgt).